We begin with the raw amino-acid sequence, 150 residues long: Cytochrome c oxidase subunit 5A, mitochondrial (150 aa).

A mitochondrion-targeting transit peptide spans 1 to 41 (MLGAALRRCAVAATSRAGPRGLLHSAPNPGPAAAIQSVRCY). Residues 2 to 17 (LGAALRRCAVAATSRA) carry the SIFI-degron motif. 2 positions are modified to N6-acetyllysine: Lys87 and Lys113. Thr141 is modified (phosphothreonine).

It belongs to the cytochrome c oxidase subunit 5A family. As to quaternary structure, component of the cytochrome c oxidase (complex IV, CIV), a multisubunit enzyme composed of 14 subunits. The complex is composed of a catalytic core of 3 subunits MT-CO1, MT-CO2 and MT-CO3, encoded in the mitochondrial DNA, and 11 supernumerary subunits COX4I, COX5A, COX5B, COX6A, COX6B, COX6C, COX7A, COX7B, COX7C, COX8 and NDUFA4, which are encoded in the nuclear genome. The complex exists as a monomer or a dimer and forms supercomplexes (SCs) in the inner mitochondrial membrane with NADH-ubiquinone oxidoreductase (complex I, CI) and ubiquinol-cytochrome c oxidoreductase (cytochrome b-c1 complex, complex III, CIII), resulting in different assemblies (supercomplex SCI(1)III(2)IV(1) and megacomplex MCI(2)III(2)IV(2)). Interacts with AFG1L. Interacts with RAB5IF. Post-translationally, in response to mitochondrial stress, the precursor protein is ubiquitinated by the SIFI complex in the cytoplasm before mitochondrial import, leading to its degradation. Within the SIFI complex, UBR4 initiates ubiquitin chain that are further elongated or branched by KCMF1.

The protein resides in the mitochondrion inner membrane. Its pathway is energy metabolism; oxidative phosphorylation. Its function is as follows. Component of the cytochrome c oxidase, the last enzyme in the mitochondrial electron transport chain which drives oxidative phosphorylation. The respiratory chain contains 3 multisubunit complexes succinate dehydrogenase (complex II, CII), ubiquinol-cytochrome c oxidoreductase (cytochrome b-c1 complex, complex III, CIII) and cytochrome c oxidase (complex IV, CIV), that cooperate to transfer electrons derived from NADH and succinate to molecular oxygen, creating an electrochemical gradient over the inner membrane that drives transmembrane transport and the ATP synthase. Cytochrome c oxidase is the component of the respiratory chain that catalyzes the reduction of oxygen to water. Electrons originating from reduced cytochrome c in the intermembrane space (IMS) are transferred via the dinuclear copper A center (CU(A)) of subunit 2 and heme A of subunit 1 to the active site in subunit 1, a binuclear center (BNC) formed by heme A3 and copper B (CU(B)). The BNC reduces molecular oxygen to 2 water molecules using 4 electrons from cytochrome c in the IMS and 4 protons from the mitochondrial matrix. This Saguinus labiatus (Red-chested mustached tamarin) protein is Cytochrome c oxidase subunit 5A, mitochondrial (COX5A).